The following is a 397-amino-acid chain: Pectate lyase (397 aa).

A signal peptide spans 1-25; sequence MDVYRIRISVFFLLVLLTFAALTTA. Asparagine 134 carries N-linked (GlcNAc...) asparagine glycosylation. 3 residues coordinate Ca(2+): aspartate 191, aspartate 216, and aspartate 220. A glycan (N-linked (GlcNAc...) asparagine) is linked at asparagine 227. The active site involves arginine 272.

It belongs to the polysaccharide lyase 1 family. Requires Ca(2+) as cofactor.

The catalysed reaction is Eliminative cleavage of (1-&gt;4)-alpha-D-galacturonan to give oligosaccharides with 4-deoxy-alpha-D-galact-4-enuronosyl groups at their non-reducing ends.. It functions in the pathway glycan metabolism; pectin degradation; 2-dehydro-3-deoxy-D-gluconate from pectin: step 2/5. This Nicotiana tabacum (Common tobacco) protein is Pectate lyase.